Reading from the N-terminus, the 313-residue chain is C-type lectin domain-containing protein 162 (313 aa).

Positions 1–17 (MNIFTLLFIYFLSDTVA) are cleaved as a signal peptide. N28 and N41 each carry an N-linked (GlcNAc...) asparagine glycan. Residues 28–145 (NATGCFQFFR…DAMFLPFVCE (118 aa)) form the C-type lectin domain. An intrachain disulfide couples C49 to C144. N-linked (GlcNAc...) asparagine glycosylation is present at N213. Residues 244–313 (VSQTETEMSR…RSKTIQISRG (70 aa)) are disordered. Residues 250-259 (EMSRSRKEKE) show a composition bias toward basic and acidic residues. N-linked (GlcNAc...) asparagine glycans are attached at residues N279 and N300. Basic and acidic residues predominate over residues 291–304 (SKEKREREENETIR).

It localises to the secreted. In Caenorhabditis elegans, this protein is C-type lectin domain-containing protein 162 (clec-162).